We begin with the raw amino-acid sequence, 118 residues long: Small ribosomal subunit protein uS13 (118 aa).

The tract at residues 94–118 (GLPVRGQRTKTNARTRKGPRKPIKK) is disordered.

Belongs to the universal ribosomal protein uS13 family. As to quaternary structure, part of the 30S ribosomal subunit. Forms a loose heterodimer with protein S19. Forms two bridges to the 50S subunit in the 70S ribosome.

Functionally, located at the top of the head of the 30S subunit, it contacts several helices of the 16S rRNA. In the 70S ribosome it contacts the 23S rRNA (bridge B1a) and protein L5 of the 50S subunit (bridge B1b), connecting the 2 subunits; these bridges are implicated in subunit movement. Contacts the tRNAs in the A and P-sites. The protein is Small ribosomal subunit protein uS13 of Edwardsiella ictaluri (strain 93-146).